A 661-amino-acid chain; its full sequence is Pumilio domain-containing protein C56F2.08c (661 aa).

The RRM domain maps to 1 to 74 (MLYVSNLPVG…GPVQVMLAKP (74 aa)). The residue at position 102 (Ser102) is a Phosphoserine. At Thr104 the chain carries Phosphothreonine. Ser105 carries the post-translational modification Phosphoserine. Positions 129-482 (INLDIVDSMI…RLMEEVGMTS (354 aa)) constitute a PUM-HD domain. Pumilio repeat units follow at residues 191 to 226 (SMLD…AMLE), 227 to 263 (RIAP…LIVK), 264 to 302 (HLRP…VMAR), and 374 to 410 (HLAT…LLLK). Residues Ser482, Ser486, Ser488, and Ser490 each carry the phosphoserine modification.

It is found in the cytoplasm. The sequence is that of Pumilio domain-containing protein C56F2.08c from Schizosaccharomyces pombe (strain 972 / ATCC 24843) (Fission yeast).